A 222-amino-acid polypeptide reads, in one-letter code: uncharacterized protein (222 aa).

The segment at residues 1-27 (MSFTRRKFVLGMGTVIFFTGSASSLLA) is a signal peptide (tat-type signal). 3 consecutive 4Fe-4S ferredoxin-type domains span residues 37-66 (YAMI…PAQG), 83-114 (TQYH…RDEQ), and 115-144 (GIVR…LNPV). [4Fe-4S] cluster-binding residues include C46, C49, C52, C56, C92, C95, C100, C104, C124, C127, C130, C134, C151, C154, C167, and C171.

Post-translationally, predicted to be exported by the Tat system. The position of the signal peptide cleavage has not been experimentally proven.

This is an uncharacterized protein from Escherichia coli O157:H7.